The following is a 261-amino-acid chain: Cytochrome c oxidase subunit 3 (261 aa).

Over 1 to 15 (MTHQSHAYHMVKPSP) the chain is Mitochondrial matrix. The chain crosses the membrane as a helical span at residues 16–34 (WPLTGALSALLMTSGLAMW). Topologically, residues 35 to 40 (FHFHSM) are mitochondrial intermembrane. The chain crosses the membrane as a helical span at residues 41-66 (TLLMLGLLTNTLTMYQWWRDVTREST). At 67-72 (YQGHHT) the chain is on the mitochondrial matrix side. The chain crosses the membrane as a helical span at residues 73-105 (PPVQKGLRYGMILFITSEVFFFAGFFWAFYHSS). The Mitochondrial intermembrane segment spans residues 106-128 (LAPTPQLGGHWPPTGITPLNPLE). The chain crosses the membrane as a helical span at residues 129–152 (VPLLNTSVLLASGVSITWAHHSLM). At 153–155 (ENN) the chain is on the mitochondrial matrix side. The chain crosses the membrane as a helical span at residues 156–183 (RNQMIQALLITILLGLYFTLLQASEYFE). Residues 184 to 190 (SPFTISD) lie on the Mitochondrial intermembrane side of the membrane. A helical membrane pass occupies residues 191–223 (GIYGSTFFVATGFHGLHVIIGSTFLTICFIRQL). The Mitochondrial matrix portion of the chain corresponds to 224–232 (MFHFTSKHH). Residues 233 to 256 (FGFEAAAWYWHFVDVVWLFLYVSI) form a helical membrane-spanning segment. Topologically, residues 257-261 (YWWGS) are mitochondrial intermembrane.

This sequence belongs to the cytochrome c oxidase subunit 3 family. In terms of assembly, component of the cytochrome c oxidase (complex IV, CIV), a multisubunit enzyme composed of 14 subunits. The complex is composed of a catalytic core of 3 subunits MT-CO1, MT-CO2 and MT-CO3, encoded in the mitochondrial DNA, and 11 supernumerary subunits COX4I1 (or COX4I2), COX5A, COX5B, COX6A1 (or COX6A2), COX6B1 (or COX6B2), COX6C, COX7A2 (or COX7A1), COX7B, COX7C, COX8A and NDUFA4, which are encoded in the nuclear genome. The complex exists as a monomer or a dimer and forms supercomplexes (SCs) in the inner mitochondrial membrane with NADH-ubiquinone oxidoreductase (complex I, CI) and ubiquinol-cytochrome c oxidoreductase (cytochrome b-c1 complex, complex III, CIII), resulting in different assemblies (supercomplex SCI(1)III(2)IV(1) and megacomplex MCI(2)III(2)IV(2)).

It is found in the mitochondrion inner membrane. It carries out the reaction 4 Fe(II)-[cytochrome c] + O2 + 8 H(+)(in) = 4 Fe(III)-[cytochrome c] + 2 H2O + 4 H(+)(out). In terms of biological role, component of the cytochrome c oxidase, the last enzyme in the mitochondrial electron transport chain which drives oxidative phosphorylation. The respiratory chain contains 3 multisubunit complexes succinate dehydrogenase (complex II, CII), ubiquinol-cytochrome c oxidoreductase (cytochrome b-c1 complex, complex III, CIII) and cytochrome c oxidase (complex IV, CIV), that cooperate to transfer electrons derived from NADH and succinate to molecular oxygen, creating an electrochemical gradient over the inner membrane that drives transmembrane transport and the ATP synthase. Cytochrome c oxidase is the component of the respiratory chain that catalyzes the reduction of oxygen to water. Electrons originating from reduced cytochrome c in the intermembrane space (IMS) are transferred via the dinuclear copper A center (CU(A)) of subunit 2 and heme A of subunit 1 to the active site in subunit 1, a binuclear center (BNC) formed by heme A3 and copper B (CU(B)). The BNC reduces molecular oxygen to 2 water molecules using 4 electrons from cytochrome c in the IMS and 4 protons from the mitochondrial matrix. This Homo sapiens (Human) protein is Cytochrome c oxidase subunit 3 (MT-CO3).